Reading from the N-terminus, the 557-residue chain is CCR4-NOT transcription complex subunit 6 (557 aa).

LRR repeat units lie at residues 52–73, 75–96, 98–120, and 121–143; these read HLTA…IAKL, NLVY…LGNM, SLRE…GKLF, and QLQT…YQEP. Residues 153-557 form a nuclease domain region; it reads LLDNLSGTAK…VNGIHLPGRR (405 aa). Position 240 (glutamate 240) interacts with Mg(2+). Glutamate 240, glutamate 276, histidine 361, and proline 366 together coordinate substrate. Aspartate 412 is a Mg(2+) binding site. Aspartate 412 (proton donor/acceptor) is an active-site residue. The substrate site is built by asparagine 414, asparagine 481, and phenylalanine 486.

It belongs to the CCR4/nocturin family. Component of the CCR4-NOT complex; distinct complexes seem to exist that differ in the participation of probably mutually exclusive catalytic subunits; the complex contains two deadenylase subunits, CNOT6 or CNOT6L, and CNOT7 or CNOT8. Interacts with CNOT7 and CNOT8. Interacts with UNR. Interacts with ZFP36L1 (via N-terminus). Interacts with ZNF335. The cofactor is Mg(2+).

The protein localises to the cytoplasm. It localises to the nucleus. The catalysed reaction is Exonucleolytic cleavage of poly(A) to 5'-AMP.. In terms of biological role, poly(A) nuclease with 3'-5' RNase activity. Catalytic component of the CCR4-NOT complex which is one of the major cellular mRNA deadenylases and is linked to various cellular processes including bulk mRNA degradation, miRNA-mediated repression, translational repression during translational initiation and general transcription regulation. Additional complex functions may be a consequence of its influence on mRNA expression. Involved in mRNA decay mediated by the major-protein-coding determinant of instability (mCRD) of the FOS gene in the cytoplasm. In the presence of ZNF335, enhances ligand-dependent transcriptional activity of nuclear hormone receptors, including RARA. The increase of ligand-dependent ESR1-mediated transcription is much smaller, if any. Mediates cell proliferation and cell survival and prevents cellular senescence. In Homo sapiens (Human), this protein is CCR4-NOT transcription complex subunit 6 (CNOT6).